A 433-amino-acid chain; its full sequence is Zinc finger and SCAN domain-containing protein 4 (433 aa).

Residues 44 to 126 (RMVLNSFQDS…RFMEDLTDDS (83 aa)) enclose the SCAN box domain. Polar residues-rich tracts occupy residues 162–184 (SAQT…TSLE) and 277–298 (QPEQ…NSTC). Disordered stretches follow at residues 162–199 (SAQT…CNSS) and 272–298 (AGCI…NSTC). 4 C2H2-type zinc fingers span residues 312–334 (YKCE…QRRH), 340–362 (FVCP…QIIH), 368–390 (FTCS…ERIH), and 396–418 (YTCP…MRTH). The interval 414-433 (HMRTHEKITPPSVPSTPEAS) is disordered.

It localises to the nucleus. The protein localises to the chromosome. It is found in the telomere. Its function is as follows. Embryonic stem (ES) cell-specific transcription factor required to regulate ES cell pluripotency. Binds telomeres and plays a key role in genomic stability in ES cells by regulating telomere elongation. Acts as an activator of spontaneous telomere sister chromatid exchange (T-SCE) and telomere elongation in undifferentiated ES cells. This is Zinc finger and SCAN domain-containing protein 4 (ZSCAN4) from Pongo pygmaeus (Bornean orangutan).